We begin with the raw amino-acid sequence, 171 residues long: Cardioactive peptide (171 aa).

The N-terminal stretch at 1 to 26 (MQMYHVVLGCSLAILLVILDIPQASC) is a signal peptide. The propeptide occupies 27 to 49 (DDVVIQKRQVDPAEMDRLLDPKR). A disulfide bridge links cysteine 54 with cysteine 60. Cysteine 60 bears the Cysteine amide mark. The propeptide occupies 64–171 (RSDESMGTLV…QEEITKPWSR (108 aa)). A disordered region spans residues 116 to 171 (QSNQFGAGMDRPLPLPIAGYRRKRFADPESQAPAPHSNLPRATSQLQEEITKPWSR).

Central nervous system; most neurons exhibit coexpression with burs.

The protein localises to the secreted. In terms of biological role, cardioregulatory neurohormone that increases heart beat rate during adult wing inflation; has no effect on beat amplitude. The effect of CCAP is both ino- and chronotropic. The sequence is that of Cardioactive peptide from Periplaneta americana (American cockroach).